The primary structure comprises 151 residues: D-aminoacyl-tRNA deacylase (151 aa).

The short motif at 137-138 (GP) is the Gly-cisPro motif, important for rejection of L-amino acids element.

This sequence belongs to the DTD family. As to quaternary structure, homodimer.

It is found in the cytoplasm. The catalysed reaction is glycyl-tRNA(Ala) + H2O = tRNA(Ala) + glycine + H(+). It catalyses the reaction a D-aminoacyl-tRNA + H2O = a tRNA + a D-alpha-amino acid + H(+). Functionally, an aminoacyl-tRNA editing enzyme that deacylates mischarged D-aminoacyl-tRNAs. Also deacylates mischarged glycyl-tRNA(Ala), protecting cells against glycine mischarging by AlaRS. Acts via tRNA-based rather than protein-based catalysis; rejects L-amino acids rather than detecting D-amino acids in the active site. By recycling D-aminoacyl-tRNA to D-amino acids and free tRNA molecules, this enzyme counteracts the toxicity associated with the formation of D-aminoacyl-tRNA entities in vivo and helps enforce protein L-homochirality. The polypeptide is D-aminoacyl-tRNA deacylase (Protochlamydia amoebophila (strain UWE25)).